The sequence spans 360 residues: Phospho-N-acetylmuramoyl-pentapeptide-transferase (360 aa).

Helical transmembrane passes span 26–46, 73–93, 94–114, 132–152, 168–188, 199–219, 239–259, 263–283, 288–308, and 338–358; these read AVLS…KMIL, TMGG…WGDL, SNPY…IGFV, WKYF…YMIG, IMPQ…VGTS, GLAI…AWAT, LVIF…FNTY, VFMG…IAVL, FLLV…ILQV, and VIIR…VTLK.

It belongs to the glycosyltransferase 4 family. MraY subfamily. The cofactor is Mg(2+).

Its subcellular location is the cell inner membrane. It carries out the reaction UDP-N-acetyl-alpha-D-muramoyl-L-alanyl-gamma-D-glutamyl-meso-2,6-diaminopimeloyl-D-alanyl-D-alanine + di-trans,octa-cis-undecaprenyl phosphate = di-trans,octa-cis-undecaprenyl diphospho-N-acetyl-alpha-D-muramoyl-L-alanyl-D-glutamyl-meso-2,6-diaminopimeloyl-D-alanyl-D-alanine + UMP. It participates in cell wall biogenesis; peptidoglycan biosynthesis. Catalyzes the initial step of the lipid cycle reactions in the biosynthesis of the cell wall peptidoglycan: transfers peptidoglycan precursor phospho-MurNAc-pentapeptide from UDP-MurNAc-pentapeptide onto the lipid carrier undecaprenyl phosphate, yielding undecaprenyl-pyrophosphoryl-MurNAc-pentapeptide, known as lipid I. The protein is Phospho-N-acetylmuramoyl-pentapeptide-transferase of Actinobacillus succinogenes (strain ATCC 55618 / DSM 22257 / CCUG 43843 / 130Z).